A 313-amino-acid polypeptide reads, in one-letter code: Probable 5-dehydro-4-deoxyglucarate dehydratase (313 aa).

This sequence belongs to the DapA family.

The catalysed reaction is 5-dehydro-4-deoxy-D-glucarate + H(+) = 2,5-dioxopentanoate + CO2 + H2O. Its pathway is carbohydrate acid metabolism; D-glucarate degradation; 2,5-dioxopentanoate from D-glucarate: step 2/2. The sequence is that of Probable 5-dehydro-4-deoxyglucarate dehydratase from Bradyrhizobium sp. (strain BTAi1 / ATCC BAA-1182).